A 307-amino-acid polypeptide reads, in one-letter code: MLRLKTQDSRLKTQDSRLKTQDSRLKTQDSRLKTQDSRLKTQDSRLKTQDSRLKTQDSRLKTQDSRLKTQDSRLKTQDSRLKTQDSRLKTQDSFSVDDNGSGNVFVCGDLVNSKENKVQFNGNNNKLIIEDDVECRWLTVIFRGDNNYVRIHKNSKIKGDIVATKGSKVIIGRRTTIGAGFEVVTDKCNVTIGHDCMIARDVILRASDGHPIFDIHSKKRINWAKDIIISSYVWVGRNVSIMKGVSVGSGSVIGYGSIVTKDVPSMCAAAGNPAKIIKRNIIWARTDKAELISDDKRCSSYHAKLTQ.

Over residues 1–90 (MLRLKTQDSR…LKTQDSRLKT (90 aa)) the composition is skewed to basic and acidic residues. Residues 1–95 (MLRLKTQDSR…SRLKTQDSFS (95 aa)) form a disordered region. 13 tandem repeats follow at residues 3–9 (RLKTQDS), 10–16 (RLKTQDS), 17–23 (RLKTQDS), 24–30 (RLKTQDS), 31–37 (RLKTQDS), 38–44 (RLKTQDS), 45–51 (RLKTQDS), 52–58 (RLKTQDS), 59–65 (RLKTQDS), 66–72 (RLKTQDS), 73–79 (RLKTQDS), 80–86 (RLKTQDS), and 87–93 (RLKTQDS). The 13 X 7 AA tandem repeat of RLKTQDS encoded by a 7 nucleotide repeat stretch occupies residues 3–93 (RLKTQDSRLK…QDSRLKTQDS (91 aa)). Acetyl-CoA is bound by residues 208–210 (DGH), Arg-237, Lys-243, Lys-261, and Lys-278.

This sequence belongs to the transferase hexapeptide repeat family. Homotrimer. Hexamer formed by two homotrimers.

The catalysed reaction is [N-acetyl-alpha-D-neuraminosyl-(2-&gt;8)](n) + n acetyl-CoA = [N,O(9)-diacetyl-alpha-D-neuraminosyl-(2-&gt;8)](n) + n CoA. It catalyses the reaction [N-acetyl-alpha-D-neuraminosyl-(2-&gt;8)](n) + n acetyl-CoA = [O(7),N-diacetyl-alpha-D-neuraminosyl-(2-&gt;8)](n) + n CoA. Functionally, catalyzes the O-acetylation of capsular polymeric sialic acid. Shows high substrate specificity toward polymers of sialic acid that contains a large number of residues. This chain is Polysialic acid O-acetyltransferase, found in Escherichia coli O1:K1 / APEC.